The chain runs to 306 residues: Serine/threonine-protein kinase csk1 (306 aa).

One can recognise a Protein kinase domain in the interval 11–306 (LTDIRHLTDG…KVSARLSQYA (296 aa)). ATP contacts are provided by residues 17-25 (LTDGTISEV) and Lys40. The active-site Proton acceptor is the Asp129.

Belongs to the protein kinase superfamily. CMGC Ser/Thr protein kinase family. CDC2/CDKX subfamily.

The catalysed reaction is L-seryl-[protein] + ATP = O-phospho-L-seryl-[protein] + ADP + H(+). The enzyme catalyses L-threonyl-[protein] + ATP = O-phospho-L-threonyl-[protein] + ADP + H(+). Its function is as follows. Acts as a CAK-activating kinase that specifically activates crk1 of the crk1-mcs2 CAK complex. The polypeptide is Serine/threonine-protein kinase csk1 (csk1) (Schizosaccharomyces pombe (strain 972 / ATCC 24843) (Fission yeast)).